The sequence spans 203 residues: Peptide deformylase (203 aa).

Positions 130 and 173 each coordinate Fe cation. The active site involves E174. H177 contributes to the Fe cation binding site.

Belongs to the polypeptide deformylase family. It depends on Fe(2+) as a cofactor.

The catalysed reaction is N-terminal N-formyl-L-methionyl-[peptide] + H2O = N-terminal L-methionyl-[peptide] + formate. Functionally, removes the formyl group from the N-terminal Met of newly synthesized proteins. Requires at least a dipeptide for an efficient rate of reaction. N-terminal L-methionine is a prerequisite for activity but the enzyme has broad specificity at other positions. The protein is Peptide deformylase of Streptococcus pneumoniae serotype 2 (strain D39 / NCTC 7466).